The primary structure comprises 75 residues: uncharacterized protein (75 aa).

Residues 1–14 (MNDNNDNNNNNKNI) show a composition bias toward low complexity. The segment at 1 to 30 (MNDNNDNNNNNKNIDNVDDDNDDNDKGKYK) is disordered.

This is an uncharacterized protein from Dictyostelium discoideum (Social amoeba).